Consider the following 740-residue polypeptide: Folic acid synthesis protein fol1 (740 aa).

2 DHNA regions span residues 39 to 160 and 161 to 280; these read DLIH…REID and DQFF…SCFS. The HPPK stretch occupies residues 291–449; sequence IDNEAVYISL…EKIVDHDIKP (159 aa). One can recognise a Pterin-binding domain in the interval 471–730; it reads TYIMAILNLT…DVYEMYKISK (260 aa). A DHPS region spans residues 473–740; that stretch reads IMAILNLTPD…MSDAIWKEIY (268 aa). Asn478 lines the Mg(2+) pocket. (7,8-dihydropterin-6-yl)methyl diphosphate contacts are provided by residues Thr517, Asp552, Asn571, Asp643, Lys683, and 718-720; that span reads RVH.

The protein in the N-terminal section; belongs to the DHNA family. In the central section; belongs to the HPPK family. It in the C-terminal section; belongs to the DHPS family. Requires Mg(2+) as cofactor.

It catalyses the reaction 7,8-dihydroneopterin = 6-hydroxymethyl-7,8-dihydropterin + glycolaldehyde. The catalysed reaction is 6-hydroxymethyl-7,8-dihydropterin + ATP = (7,8-dihydropterin-6-yl)methyl diphosphate + AMP + H(+). It carries out the reaction (7,8-dihydropterin-6-yl)methyl diphosphate + 4-aminobenzoate = 7,8-dihydropteroate + diphosphate. Its pathway is cofactor biosynthesis; tetrahydrofolate biosynthesis; 2-amino-4-hydroxy-6-hydroxymethyl-7,8-dihydropteridine diphosphate from 7,8-dihydroneopterin triphosphate: step 3/4. The protein operates within cofactor biosynthesis; tetrahydrofolate biosynthesis; 2-amino-4-hydroxy-6-hydroxymethyl-7,8-dihydropteridine diphosphate from 7,8-dihydroneopterin triphosphate: step 4/4. It participates in cofactor biosynthesis; tetrahydrofolate biosynthesis; 7,8-dihydrofolate from 2-amino-4-hydroxy-6-hydroxymethyl-7,8-dihydropteridine diphosphate and 4-aminobenzoate: step 1/2. Catalyzes three sequential steps of tetrahydrofolate biosynthesis. This chain is Folic acid synthesis protein fol1 (fol1), found in Pneumocystis carinii.